A 254-amino-acid chain; its full sequence is Pyridoxine 5'-phosphate synthase (254 aa).

3-amino-2-oxopropyl phosphate is bound at residue asparagine 12. 14–15 (DH) provides a ligand contact to 1-deoxy-D-xylulose 5-phosphate. Arginine 23 lines the 3-amino-2-oxopropyl phosphate pocket. Histidine 48 serves as the catalytic Proton acceptor. Arginine 50 and histidine 55 together coordinate 1-deoxy-D-xylulose 5-phosphate. The active-site Proton acceptor is the glutamate 75. Threonine 105 serves as a coordination point for 1-deoxy-D-xylulose 5-phosphate. Histidine 199 acts as the Proton donor in catalysis. 3-amino-2-oxopropyl phosphate is bound by residues glycine 200 and 221 to 222 (GF).

It belongs to the PNP synthase family. In terms of assembly, homooctamer; tetramer of dimers.

It is found in the cytoplasm. It carries out the reaction 3-amino-2-oxopropyl phosphate + 1-deoxy-D-xylulose 5-phosphate = pyridoxine 5'-phosphate + phosphate + 2 H2O + H(+). Its pathway is cofactor biosynthesis; pyridoxine 5'-phosphate biosynthesis; pyridoxine 5'-phosphate from D-erythrose 4-phosphate: step 5/5. Functionally, catalyzes the complicated ring closure reaction between the two acyclic compounds 1-deoxy-D-xylulose-5-phosphate (DXP) and 3-amino-2-oxopropyl phosphate (1-amino-acetone-3-phosphate or AAP) to form pyridoxine 5'-phosphate (PNP) and inorganic phosphate. This Rhodopseudomonas palustris (strain ATCC BAA-98 / CGA009) protein is Pyridoxine 5'-phosphate synthase.